Consider the following 377-residue polypeptide: UDP-N-acetylglucosamine--N-acetylmuramyl-(pentapeptide) pyrophosphoryl-undecaprenol N-acetylglucosamine transferase (377 aa).

UDP-N-acetyl-alpha-D-glucosamine-binding positions include 29-31 (TAG), N142, R179, S213, and Q308.

The protein belongs to the glycosyltransferase 28 family. MurG subfamily.

Its subcellular location is the cell membrane. It carries out the reaction di-trans,octa-cis-undecaprenyl diphospho-N-acetyl-alpha-D-muramoyl-L-alanyl-D-glutamyl-meso-2,6-diaminopimeloyl-D-alanyl-D-alanine + UDP-N-acetyl-alpha-D-glucosamine = di-trans,octa-cis-undecaprenyl diphospho-[N-acetyl-alpha-D-glucosaminyl-(1-&gt;4)]-N-acetyl-alpha-D-muramoyl-L-alanyl-D-glutamyl-meso-2,6-diaminopimeloyl-D-alanyl-D-alanine + UDP + H(+). The protein operates within cell wall biogenesis; peptidoglycan biosynthesis. Cell wall formation. Catalyzes the transfer of a GlcNAc subunit on undecaprenyl-pyrophosphoryl-MurNAc-pentapeptide (lipid intermediate I) to form undecaprenyl-pyrophosphoryl-MurNAc-(pentapeptide)GlcNAc (lipid intermediate II). The protein is UDP-N-acetylglucosamine--N-acetylmuramyl-(pentapeptide) pyrophosphoryl-undecaprenol N-acetylglucosamine transferase of Saccharopolyspora erythraea (strain ATCC 11635 / DSM 40517 / JCM 4748 / NBRC 13426 / NCIMB 8594 / NRRL 2338).